The following is a 446-amino-acid chain: Protein odr-4 homolog (446 aa).

Transmembrane regions (helical) follow at residues 81 to 101 (MLPGGLLVLSVFIIATPELSK) and 424 to 444 (MGVVIAVAVAVFASIFSFNYF).

It belongs to the ODR-4 family.

The protein resides in the membrane. Functionally, may play a role in the trafficking of a subset of G-protein coupled receptors. This chain is Protein odr-4 homolog (ODR4), found in Gallus gallus (Chicken).